We begin with the raw amino-acid sequence, 342 residues long: Ribosomal RNA small subunit methyltransferase C (342 aa).

It belongs to the methyltransferase superfamily. RsmC family. Monomer.

The protein localises to the cytoplasm. It catalyses the reaction guanosine(1207) in 16S rRNA + S-adenosyl-L-methionine = N(2)-methylguanosine(1207) in 16S rRNA + S-adenosyl-L-homocysteine + H(+). Specifically methylates the guanine in position 1207 of 16S rRNA in the 30S particle. The chain is Ribosomal RNA small subunit methyltransferase C from Shewanella sp. (strain MR-4).